The primary structure comprises 389 residues: MPLPTNQLRLAMVAGEPSGDLLAASLLGGLQARLPASTHYYGIGGQRMLAHGFDSHWQMDKLTVRGYVEALGQIPEILRIRGELKRQLLAERPDAFIGVDAPDFNFNVEQAARDAGIPSIHFVCPSIWAWRGGRIKKIAKSVDHMLCLFPFEPAILDKAGVASTYVGHPLADEIPLEPDTHGARIALGLPADGPVIAVLPGSRRSEIALIGPTFFAAMALMQEREPGVRFVMPAATPALRELLQPLVAAHPQLALTITDGRSQVAMTAADAILVKSGTVTLEAALLKKPMVISYKVPWLTGQIMRRQGYLPYVGLPNILAGRFVVPELLQHFATPEALADATLTQLRDDANRRTLTEVFTEMHLSLRQNTAAKAAEAVVRVLEQRKGRA.

Belongs to the LpxB family.

It carries out the reaction a lipid X + a UDP-2-N,3-O-bis[(3R)-3-hydroxyacyl]-alpha-D-glucosamine = a lipid A disaccharide + UDP + H(+). Its pathway is bacterial outer membrane biogenesis; LPS lipid A biosynthesis. Functionally, condensation of UDP-2,3-diacylglucosamine and 2,3-diacylglucosamine-1-phosphate to form lipid A disaccharide, a precursor of lipid A, a phosphorylated glycolipid that anchors the lipopolysaccharide to the outer membrane of the cell. This Burkholderia vietnamiensis (strain G4 / LMG 22486) (Burkholderia cepacia (strain R1808)) protein is Lipid-A-disaccharide synthase.